The sequence spans 863 residues: Autotaxin (863 aa).

Residues M1–G27 form the signal peptide. Residues F28–R35 constitute a propeptide, removed by furin. An N-linked (GlcNAc...) asparagine glycan is attached at N54. SMB domains follow at residues I55–A98 and R99–H143. Intrachain disulfides connect C59/C76, C63/C94, C74/C87, C80/C86, C103/C120, C108/C138, C118/C131, C124/C130, C149/C195, and C157/C351. Positions R127–D129 match the Cell attachment site motif. A phosphodiesterase region spans residues V145–P502. Residues D172 and T210 each coordinate Zn(2+). Residue T210 is the Nucleophile of the active site. T210, N231, and D312 together coordinate 1-(9Z-octadecenoyl)-sn-glycero-3-phosphate. Residues T210, N231, and D312 each contribute to the 1-hexadecanoyl-sn-glycero-3-phosphate site. The 1-tetradecanoyl-sn-glycerol 3-phosphate site is built by T210, N231, and D312. Zn(2+) contacts are provided by D312, H316, D359, and H360. Intrachain disulfides connect C367-C469, C414-C806, C567-C667, C569-C652, and C775-C785. An N-linked (GlcNAc...) asparagine glycan is attached at N411. H475 contacts Zn(2+). H475 lines the 1-(9Z-octadecenoyl)-sn-glycero-3-phosphate pocket. 1-hexadecanoyl-sn-glycero-3-phosphate is bound at residue H475. Residue H475 coordinates 1-tetradecanoyl-sn-glycerol 3-phosphate. The N-linked (GlcNAc...) asparagine glycan is linked to N525. The tract at residues L598–I863 is nuclease-like domain. Positions 740, 742, 744, 746, and 748 each coordinate Ca(2+). The N-linked (GlcNAc...) asparagine glycan is linked to N807. Positions I830 to T851 are required for secretion.

It belongs to the nucleotide pyrophosphatase/phosphodiesterase family. Requires Zn(2+) as cofactor. The cofactor is Ca(2+). N-glycosylation, but not furin-cleavage, plays a critical role on secretion and on lysoPLD activity. In terms of processing, the interdomain disulfide bond between Cys-414 and Cys-806 is essential for catalytic activity. As to expression, detected in blood plasma (at protein level). Predominantly expressed in brain, placenta, ovary, and small intestine. Expressed in a number of carcinomas such as hepatocellular and prostate carcinoma, neuroblastoma and non-small-cell lung cancer. Expressed in body fluids such as plasma, cerebral spinal fluid (CSF), saliva, follicular and amniotic fluids. Not detected in leukocytes. Isoform 1 is more highly expressed in peripheral tissues than in the central nervous system (CNS). Adipocytes only express isoform 1. Isoform 3 is more highly expressed in the brain than in peripheral tissues.

It is found in the secreted. The catalysed reaction is a 1-O-alkyl-sn-glycero-3-phosphoethanolamine + H2O = a 1-O-alkyl-sn-glycero-3-phosphate + ethanolamine + H(+). It carries out the reaction a 1-acyl-sn-glycero-3-phosphoethanolamine + H2O = a 1-acyl-sn-glycero-3-phosphate + ethanolamine + H(+). The enzyme catalyses 1-(9Z-octadecenoyl)-sn-glycero-3-phosphoethanolamine + H2O = 1-(9Z-octadecenoyl)-sn-glycero-3-phosphate + ethanolamine + H(+). It catalyses the reaction a 1-O-alkyl-sn-glycero-3-phosphocholine + H2O = a 1-O-alkyl-sn-glycero-3-phosphate + choline + H(+). The catalysed reaction is 1-O-(9Z-octadecenyl)-sn-glycero-3-phosphocholine + H2O = 1-O-(9Z-octadecenyl)-sn-glycero-3-phosphate + choline + H(+). It carries out the reaction 1-O-hexadecyl-sn-glycero-3-phosphocholine + H2O = 1-O-hexadecyl-sn-glycero-3-phosphate + choline + H(+). The enzyme catalyses a 1-O-(1Z-alkenyl)-sn-glycero-3-phosphocholine + H2O = a 1-O-(1Z-alkenyl)-sn-glycero-3-phosphate + choline + H(+). It catalyses the reaction a 1-acyl-sn-glycero-3-phosphocholine + H2O = a 1-acyl-sn-glycero-3-phosphate + choline + H(+). The catalysed reaction is 1-dodecanoyl-sn-glycero-3-phosphocholine + H2O = 1-dodecanoyl-sn-glycerol 3-phosphate + choline + H(+). It carries out the reaction 1-(9Z-octadecenoyl)-sn-glycero-3-phosphocholine + H2O = 1-(9Z-octadecenoyl)-sn-glycero-3-phosphate + choline + H(+). The enzyme catalyses 1-tetradecanoyl-sn-glycero-3-phosphocholine + H2O = 1-tetradecanoyl-sn-glycerol 3-phosphate + choline + H(+). It catalyses the reaction 1-decanoyl-sn-glycero-3-phosphocholine + H2O = 1-decanoyl-sn-glycero-3-phosphate + choline + H(+). The catalysed reaction is 1-octadecanoyl-sn-glycero-3-phosphocholine + H2O = 1-octadecanoyl-sn-glycero-3-phosphate + choline + H(+). It carries out the reaction 1-hexadecanoyl-sn-glycero-3-phosphocholine + H2O = 1-hexadecanoyl-sn-glycero-3-phosphate + choline + H(+). The enzyme catalyses 1-hexanoyl-sn-glycero-3-phosphocholine + H2O = 1-hexanoyl-sn-glycero-3-phosphate + choline + H(+). It catalyses the reaction 1-(9Z,12Z)-octadecadienoyl-sn-glycero-3-phosphocholine + H2O = 1-(9Z,12Z)-octadecadienoyl-sn-glycero-3-phosphate + choline + H(+). The catalysed reaction is sphing-4-enine-phosphocholine + H2O = sphing-4-enine 1-phosphate + choline + H(+). It carries out the reaction 1-(5Z,8Z,11Z,14Z-eicosatetraenoyl)-sn-glycero-3-phosphocholine + H2O = 1-(5Z,8Z,11Z,14Z-eicosatetraenoyl)-sn-glycero-3-phosphate + choline + H(+). The enzyme catalyses a 2-acyl-sn-glycero-3-phosphocholine + H2O = a 2-acyl-sn-glycerol 3-phosphate + choline + H(+). It catalyses the reaction a 1,2-diacyl-sn-glycero-3-phosphocholine + H2O = a 1,2-diacyl-sn-glycero-3-phosphate + choline + H(+). The catalysed reaction is 1,2-dioctanoyl-sn-glycero-3-phosphocholine + H2O = 1,2-dioctanoyl-sn-glycero-3-phosphate + choline + H(+). It carries out the reaction 1,2-didecanoyl-sn-glycero-3-phosphocholine + H2O = 1,2-didecanoyl-sn-glycero-3-phosphate + choline + H(+). The enzyme catalyses a 1-acyl-sn-glycero-3-phospho-L-serine + H2O = a 1-acyl-sn-glycero-3-phosphate + L-serine + H(+). It catalyses the reaction 1-(9Z-octadecenoyl)-sn-glycero-3-phospho-L-serine + H2O = 1-(9Z-octadecenoyl)-sn-glycero-3-phosphate + L-serine + H(+). The catalysed reaction is a 2-acyl-sn-glycero-3-phospho-L-serine + H2O = a 2-acyl-sn-glycerol 3-phosphate + L-serine + H(+). Its activity is regulated as follows. Inhibited by lysophosphatidic acid (LPA) and sphingosine-1-phosphate (S1P). Inhibited by EDTA and EGTA. In terms of biological role, secreted lysophospholipase D that hydrolyzes lysophospholipids to produce the signaling molecule lysophosphatidic acid (LPA) in extracellular fluids. Its major substrate is lysophosphatidylcholine. Can also act on sphingosylphosphorylcholine producing sphingosine-1-phosphate, a modulator of cell motility. Can hydrolyze, in vitro, bis-pNPP, to some extent pNP-TMP, and barely ATP. Involved in several motility-related processes such as angiogenesis and neurite outgrowth. Acts as an angiogenic factor by stimulating migration of smooth muscle cells and microtubule formation. Stimulates migration of melanoma cells, probably via a pertussis toxin-sensitive G protein. May have a role in induction of parturition. Possible involvement in cell proliferation and adipose tissue development. Required for LPA production in activated platelets, cleaves the sn-1 lysophospholipids to generate sn-1 lysophosphatidic acids containing predominantly 18:2 and 20:4 fatty acids. Shows a preference for the sn-1 to the sn-2 isomer of 1-O-alkyl-sn-glycero-3-phosphocholine (lyso-PAF). The chain is Autotaxin from Homo sapiens (Human).